The following is a 92-amino-acid chain: Small ribosomal subunit protein uS19 (92 aa).

This sequence belongs to the universal ribosomal protein uS19 family.

Its function is as follows. Protein S19 forms a complex with S13 that binds strongly to the 16S ribosomal RNA. The protein is Small ribosomal subunit protein uS19 of Rhodopseudomonas palustris (strain BisB5).